The primary structure comprises 160 residues: Surface-adhesin protein E (160 aa).

The signal sequence occupies residues 1 to 15 (MKKIILTLSLGLLTA). C16 is lipidated: N-palmitoyl cysteine. The S-diacylglycerol cysteine moiety is linked to residue C16.

Its subcellular location is the cell outer membrane. It is found in the cell surface. In terms of biological role, acts as a multifunctional adhesin involved in direct interactions with host epithelial cells and host proteins. The sequence is that of Surface-adhesin protein E (pe) from Haemophilus influenzae (strain ATCC 51907 / DSM 11121 / KW20 / Rd).